The chain runs to 360 residues: MLVWLAEYLVQYNTAFNVVSYITFRAIMALLTAMGIGLWIGPEVIRRLQLLKFGQEVRNDGPESHFKKRGTPTMGGIMILIAIGVSTLLWADLRNSYVWFVLFVLFGYGAVGFVDDYWKIKRKNTDGLIARWKYFWLSVIALIAVFGIYAVGKDTAATQLVVPFFKDFMPQLGIFFIILSYFVIVGTSNAVNLTDGLDGLAIVPTIMVASAFALIAWATGNFNFAQYLHIPFVPNAGELVILCTAIVGAGLGFLWYNTYPAQVFMGDVGSLSLGGALGTIAVLVRQELLLVIMGGVFVVEALSVILQVGSYKLRQKRIFRMAPIHHHFELKGWPEPRVIVRFWIITLMLVLIGLVTLKLR.

The next 10 helical transmembrane spans lie at 21–41 (YITF…LWIG), 73–93 (TMGG…WADL), 98–118 (VWFV…DDYW), 132–152 (WKYF…YAVG), 168–188 (FMPQ…VGTS), 199–219 (GLAI…AWAT), 236–256 (AGEL…FLWY), 263–283 (VFMG…IAVL), 288–308 (LLLV…ILQV), and 338–358 (VIVR…VTLK).

It belongs to the glycosyltransferase 4 family. MraY subfamily. Requires Mg(2+) as cofactor.

It is found in the cell inner membrane. The catalysed reaction is UDP-N-acetyl-alpha-D-muramoyl-L-alanyl-gamma-D-glutamyl-meso-2,6-diaminopimeloyl-D-alanyl-D-alanine + di-trans,octa-cis-undecaprenyl phosphate = di-trans,octa-cis-undecaprenyl diphospho-N-acetyl-alpha-D-muramoyl-L-alanyl-D-glutamyl-meso-2,6-diaminopimeloyl-D-alanyl-D-alanine + UMP. Its pathway is cell wall biogenesis; peptidoglycan biosynthesis. Its function is as follows. Catalyzes the initial step of the lipid cycle reactions in the biosynthesis of the cell wall peptidoglycan: transfers peptidoglycan precursor phospho-MurNAc-pentapeptide from UDP-MurNAc-pentapeptide onto the lipid carrier undecaprenyl phosphate, yielding undecaprenyl-pyrophosphoryl-MurNAc-pentapeptide, known as lipid I. The protein is Phospho-N-acetylmuramoyl-pentapeptide-transferase of Actinobacillus pleuropneumoniae serotype 3 (strain JL03).